The chain runs to 358 residues: Probable protein phosphatase 2C 68 (358 aa).

Residues 74 to 352 (RHGAASVAGR…DNISVVVVDL (279 aa)) form the PPM-type phosphatase domain. Residues aspartate 117, glycine 118, aspartate 298, and aspartate 343 each coordinate Mn(2+).

The protein belongs to the PP2C family. The cofactor is Mg(2+). Mn(2+) is required as a cofactor.

It localises to the nucleus. The protein resides in the cytoplasm. It is found in the cytosol. It catalyses the reaction O-phospho-L-seryl-[protein] + H2O = L-seryl-[protein] + phosphate. The catalysed reaction is O-phospho-L-threonyl-[protein] + H2O = L-threonyl-[protein] + phosphate. Its function is as follows. Involved in the regulation of abiotic stress responses. Acts as a negative regulator of abscisic acid (ABA) signaling and positive regulator of abiotic stress signaling. May be involved in panicle development. This is Probable protein phosphatase 2C 68 from Oryza sativa subsp. japonica (Rice).